We begin with the raw amino-acid sequence, 180 residues long: Small ribosomal subunit protein uS4 (180 aa).

An S4 RNA-binding domain is found at 102 to 174; sequence RRLQTMLVRK…PARKLEQKEE (73 aa). A disordered region spans residues 154–180; it reads VPFSPLANPEHPARKLEQKEETNEESA. The segment covering 164–174 has biased composition (basic and acidic residues); that stretch reads HPARKLEQKEE.

The protein belongs to the universal ribosomal protein uS4 family. As to quaternary structure, part of the 30S ribosomal subunit. Contacts protein S5. The interaction surface between S4 and S5 is involved in control of translational fidelity.

Functionally, one of the primary rRNA binding proteins, it binds directly to 16S rRNA where it nucleates assembly of the body of the 30S subunit. In terms of biological role, with S5 and S12 plays an important role in translational accuracy. This chain is Small ribosomal subunit protein uS4, found in Nanoarchaeum equitans (strain Kin4-M).